We begin with the raw amino-acid sequence, 242 residues long: Venom nerve growth factor 3 (242 aa).

The signal sequence occupies residues 1 to 18; the sequence is MSMLCYTLIIAFLIGIWA. A propeptide spanning residues 19 to 125 is cleaved from the precursor; that stretch reads APQSEDNVPL…ALNRNIQAKR (107 aa). The segment at 45–69 is disordered; sequence HEGLKTSRNTDQRHPAPKKVDDQEP. The segment covering 46 to 66 has biased composition (basic and acidic residues); the sequence is EGLKTSRNTDQRHPAPKKVDD. 3 disulfides stabilise this stretch: C139–C203, C181–C231, and C191–C233.

It belongs to the NGF-beta family. Homodimer; non-covalently linked. As to expression, expressed by the venom gland.

Its subcellular location is the secreted. Its function is as follows. Nerve growth factor is important for the development and maintenance of the sympathetic and sensory nervous systems. It stimulates division and differentiation of sympathetic and embryonic sensory neurons as well as basal forebrain cholinergic neurons in the brain. Its relevance in the snake venom is not clear. However, it has been shown to inhibit metalloproteinase-dependent proteolysis of platelet glycoprotein Ib alpha, suggesting a metalloproteinase inhibition to prevent metalloprotease autodigestion and/or protection against prey proteases. Binds a lipid between the two protein chains in the homodimer. The lipid-bound form promotes histamine relase from mouse mast cells, contrary to the lipid-free form. This is Venom nerve growth factor 3 from Pseudechis australis (Mulga snake).